A 728-amino-acid chain; its full sequence is Ribosome biogenesis protein bop1-A (728 aa).

The tract at residues 1–114 (MKRGSQGEAG…ENDSSDEEDI (114 aa)) is disordered. A compositionally biased stretch (acidic residues) spans 55–67 (SDDEEDHWSEEEE). Basic and acidic residues predominate over residues 68–77 (NPGKSPKEII). 7 WD repeats span residues 393-432 (GHKD…CMKS), 434-474 (VLEG…RLLC), 514-556 (KHQK…SQNP), 559-597 (KNKG…LTKK), 600-639 (TNCK…KPYK), 643-682 (HHKK…DLLQ), and 698-728 (HRDL…RLFT).

This sequence belongs to the WD repeat BOP1/ERB1 family. As to quaternary structure, component of the PeBoW complex, composed of bop1, pes1 and wdr12. The complex is held together by bop1, which interacts with pes1 via its N-terminal domain and with wdr12 via a high-affinity interaction between the seven-bladed beta-propeller domains of the 2 proteins. The PeBoW complex associates with the 66S pre-ribosome.

The protein resides in the nucleus. It localises to the nucleolus. Its subcellular location is the nucleoplasm. Component of the PeBoW complex, which is required for maturation of 28S and 5.8S ribosomal RNAs and formation of the 60S ribosome. This Xenopus laevis (African clawed frog) protein is Ribosome biogenesis protein bop1-A (bop1-a).